The following is a 429-amino-acid chain: Adenylosuccinate synthetase (429 aa).

Residues 12 to 18 (GDEGKGK) and 40 to 42 (GHT) contribute to the GTP site. The Proton acceptor role is filled by D13. 2 residues coordinate Mg(2+): D13 and G40. IMP-binding positions include 13 to 16 (DEGK), 38 to 41 (NAGH), T129, R143, Q223, T238, and R302. H41 functions as the Proton donor in the catalytic mechanism. Residue 298–304 (VVTGRKR) participates in substrate binding. GTP-binding positions include R304, 330–332 (KLD), and 412–414 (STS).

The protein belongs to the adenylosuccinate synthetase family. Homodimer. Mg(2+) is required as a cofactor.

The protein resides in the cytoplasm. The catalysed reaction is IMP + L-aspartate + GTP = N(6)-(1,2-dicarboxyethyl)-AMP + GDP + phosphate + 2 H(+). It participates in purine metabolism; AMP biosynthesis via de novo pathway; AMP from IMP: step 1/2. Its function is as follows. Plays an important role in the de novo pathway of purine nucleotide biosynthesis. Catalyzes the first committed step in the biosynthesis of AMP from IMP. This Brucella abortus (strain 2308) protein is Adenylosuccinate synthetase.